We begin with the raw amino-acid sequence, 271 residues long: Tryptophan synthase alpha chain (271 aa).

Active-site proton acceptor residues include E49 and D60.

The protein belongs to the TrpA family. Tetramer of two alpha and two beta chains.

The enzyme catalyses (1S,2R)-1-C-(indol-3-yl)glycerol 3-phosphate + L-serine = D-glyceraldehyde 3-phosphate + L-tryptophan + H2O. The protein operates within amino-acid biosynthesis; L-tryptophan biosynthesis; L-tryptophan from chorismate: step 5/5. The alpha subunit is responsible for the aldol cleavage of indoleglycerol phosphate to indole and glyceraldehyde 3-phosphate. The protein is Tryptophan synthase alpha chain of Paraburkholderia phymatum (strain DSM 17167 / CIP 108236 / LMG 21445 / STM815) (Burkholderia phymatum).